Consider the following 217-residue polypeptide: Claudin-9 (217 aa).

The Cytoplasmic segment spans residues 1 to 12; the sequence is MASTGLELLGMT. A helical transmembrane segment spans residues 13–33; it reads LAVLGWLGTLVSCALPLWKVT. The Extracellular segment spans residues 34–81; the sequence is AFIGNSIVVAQVVWEGLWMSCVVQSTGQMQCKVYDSLLALPQDLQAAR. The chain crosses the membrane as a helical span at residues 82–102; sequence ALCVVALLLALLGLLVAITGA. At 103–116 the chain is on the cytoplasmic side; it reads QCTTCVEDEGAKAR. The helical transmembrane segment at 117–137 threads the bilayer; the sequence is IVLTAGVLLLLSGILVLIPVC. The Extracellular segment spans residues 138–159; that stretch reads WTAHAIIQDFYNPLVAEALKRE. A helical transmembrane segment spans residues 160 to 180; it reads LGASLYLGWAAAALLMLGGGL. The Cytoplasmic segment spans residues 181-217; sequence LCCTCPPSHFERPRGPRLGYSIPSRSGASGLDKRDYV.

Belongs to the claudin family. In terms of assembly, interacts with CLDN1, CD81 and OCLN.

It is found in the cell junction. Its subcellular location is the tight junction. It localises to the cell membrane. In terms of biological role, plays a major role in tight junction-specific obliteration of the intercellular space, through calcium-independent cell-adhesion activity. This chain is Claudin-9 (Cldn9), found in Mus musculus (Mouse).